A 376-amino-acid chain; its full sequence is Flap endonuclease 1 (376 aa).

Residues 1 to 105 (MGIKGLSKLL…GELHKRKENA (105 aa)) form an N-domain region. Residue D34 coordinates Mg(2+). 2 residues coordinate DNA: R47 and R71. 5 residues coordinate Mg(2+): D87, E159, E161, D180, and D182. An I-domain region spans residues 123–254 (QAKKLMKRTA…ITAFELIQQY (132 aa)). Residue E159 coordinates DNA. 2 residues coordinate DNA: G232 and D234. D234 serves as a coordination point for Mg(2+). An interaction with PCNA region spans residues 336 to 344 (AQGRLDSFF). The tract at residues 354 to 376 (SEAASGVKRKKPTTKAKESRKKK) is disordered. Residues 360-376 (VKRKKPTTKAKESRKKK) show a composition bias toward basic residues.

The protein belongs to the XPG/RAD2 endonuclease family. FEN1 subfamily. As to quaternary structure, interacts with PCNA. Three molecules of FEN1 bind to one PCNA trimer with each molecule binding to one PCNA monomer. PCNA stimulates the nuclease activity without altering cleavage specificity. The cofactor is Mg(2+). In terms of processing, phosphorylated. Phosphorylation upon DNA damage induces relocalization to the nuclear plasma.

It localises to the nucleus. Its subcellular location is the nucleolus. The protein localises to the nucleoplasm. It is found in the mitochondrion. Functionally, structure-specific nuclease with 5'-flap endonuclease and 5'-3' exonuclease activities involved in DNA replication and repair. During DNA replication, cleaves the 5'-overhanging flap structure that is generated by displacement synthesis when DNA polymerase encounters the 5'-end of a downstream Okazaki fragment. It enters the flap from the 5'-end and then tracks to cleave the flap base, leaving a nick for ligation. Also involved in the long patch base excision repair (LP-BER) pathway, by cleaving within the apurinic/apyrimidinic (AP) site-terminated flap. Acts as a genome stabilization factor that prevents flaps from equilibrating into structures that lead to duplications and deletions. Also possesses 5'-3' exonuclease activity on nicked or gapped double-stranded DNA, and exhibits RNase H activity. Also involved in replication and repair of rDNA and in repairing mitochondrial DNA. The protein is Flap endonuclease 1 of Entamoeba histolytica (strain ATCC 30459 / HM-1:IMSS / ABRM).